The sequence spans 93 residues: SH3 domain-binding glutamic acid-rich-like protein 3 (93 aa).

S2 is modified (N-acetylserine). The Glutaredoxin domain maps to 2–93; sequence SGLRVYSTSV…DTLQEFLKLA (92 aa). The O-linked (GalNAc...) threonine glycan is linked to T9.

This sequence belongs to the SH3BGR family. Homodimer. Interacts with MYO1C (via its IQ motifs); the interaction is dependent on calcium and takes place at membrane ruffles. May be glycosylated.

Its subcellular location is the cytoplasm. The protein resides in the cytosol. The protein localises to the cell projection. It is found in the ruffle membrane. It localises to the nucleus. Its function is as follows. Could act as a modulator of glutaredoxin biological activity. May play a role in cytoskeleton organization. This is SH3 domain-binding glutamic acid-rich-like protein 3 (Sh3bgrl3) from Mus musculus (Mouse).